The sequence spans 186 residues: Dirigent protein 7 (186 aa).

Positions 1–21 (MAKLILIIVTQILLIAAVVSA) are cleaved as a signal peptide. 3 N-linked (GlcNAc...) asparagine glycosylation sites follow: N70, N91, and N126.

This sequence belongs to the plant dirigent protein family. As to quaternary structure, homodimer.

It is found in the secreted. It localises to the extracellular space. Its subcellular location is the apoplast. Dirigent proteins impart stereoselectivity on the phenoxy radical-coupling reaction, yielding optically active lignans from two molecules of coniferyl alcohol in the biosynthesis of lignans, flavonolignans, and alkaloids and thus plays a central role in plant secondary metabolism. The polypeptide is Dirigent protein 7 (DIR7) (Arabidopsis thaliana (Mouse-ear cress)).